The chain runs to 574 residues: Putative dehydratase IlvD1 (574 aa).

[4Fe-4S] cluster is bound by residues Cys-124 and Cys-197.

The protein belongs to the IlvD/Edd family. Requires [4Fe-4S] cluster as cofactor.

Its function is as follows. Involved in the degradation of galactose via the DeLey-Doudoroff pathway. The protein is Putative dehydratase IlvD1 (ilvD1) of Rhizobium meliloti (strain 1021) (Ensifer meliloti).